A 594-amino-acid chain; its full sequence is Putative diflavin flavoprotein A 4 (594 aa).

The interval 57–250 (RRGTTSNSYL…LTLKMIAPGH (194 aa)) is zinc metallo-hydrolase. One can recognise a Flavodoxin-like domain in the interval 279 to 417 (VALIYASAYG…VCTTSGANFA (139 aa)). The flavodoxin-reductase-like stretch occupies residues 445 to 594 (VGRIIGSIGV…IRHRKSGGQY (150 aa)).

In the N-terminal section; belongs to the zinc metallo-hydrolase group 3 family. The protein in the C-terminal section; belongs to the flavodoxin reductase family. Fe cation is required as a cofactor.

Its function is as follows. Mediates electron transfer from NADH to oxygen, reducing it to water. This modular protein has 3 redox cofactors, in other organisms the same activity requires 2 or 3 proteins. This is Putative diflavin flavoprotein A 4 (dfa4) from Synechocystis sp. (strain ATCC 27184 / PCC 6803 / Kazusa).